Consider the following 376-residue polypeptide: Protein insensitive (376 aa).

Residues 50 to 79 are a coiled coil; that stretch reads QVEVENRALRDKVRYLEAKLQQHKDLLSQI. Residues 258 to 356 form the BEN domain; sequence GPNNTCVPAS…TKCADENKMM (99 aa).

As to quaternary structure, homodimer. Interacts (via BEN domain) with Su(H). Interacts with Cp190.

It localises to the nucleus. Functionally, can act as both a transcriptional repressor and corepressor. Represses the expression of genes involved in neural development and preferentially binds palindromic sequence 5'-CCAATTGG-3' to mediate transcriptional repression. Acts as a corepressor for suppressor of hairless (Su(H)) and inhibits Notch signaling during peripheral nervous system development. The protein is Protein insensitive (insv) of Drosophila melanogaster (Fruit fly).